A 656-amino-acid polypeptide reads, in one-letter code: UvrABC system protein B (656 aa).

The Helicase ATP-binding domain maps to 29–414 (KLSEFKTKQQ…SLSQNNVIEQ (386 aa)). 42–49 (GATGTGKT) contacts ATP. The Beta-hairpin signature appears at 95 to 118 (YFDFYQPEAYLPSKGIYIEKSATV). The region spanning 434 to 596 (QVEDLIEEII…KTPKTVVKPL (163 aa)) is the Helicase C-terminal domain. The UVR domain occupies 614-649 (AALIKQLTKEMKKAAANQNYELAIEIRDSIFELEKE).

This sequence belongs to the UvrB family. As to quaternary structure, forms a heterotetramer with UvrA during the search for lesions. Interacts with UvrC in an incision complex.

It is found in the cytoplasm. In terms of biological role, the UvrABC repair system catalyzes the recognition and processing of DNA lesions. A damage recognition complex composed of 2 UvrA and 2 UvrB subunits scans DNA for abnormalities. Upon binding of the UvrA(2)B(2) complex to a putative damaged site, the DNA wraps around one UvrB monomer. DNA wrap is dependent on ATP binding by UvrB and probably causes local melting of the DNA helix, facilitating insertion of UvrB beta-hairpin between the DNA strands. Then UvrB probes one DNA strand for the presence of a lesion. If a lesion is found the UvrA subunits dissociate and the UvrB-DNA preincision complex is formed. This complex is subsequently bound by UvrC and the second UvrB is released. If no lesion is found, the DNA wraps around the other UvrB subunit that will check the other stand for damage. The sequence is that of UvrABC system protein B from Mycoplasma genitalium (strain ATCC 33530 / DSM 19775 / NCTC 10195 / G37) (Mycoplasmoides genitalium).